A 951-amino-acid chain; its full sequence is Bifunctional glutamine synthetase adenylyltransferase/adenylyl-removing enzyme (951 aa).

Positions 1 to 445 (MSILPLPALP…VFDELIGDDA (445 aa)) are adenylyl removase. Positions 454–951 (HSSYSSLWQD…VSWNKWLMGA (498 aa)) are adenylyl transferase.

It belongs to the GlnE family. The cofactor is Mg(2+).

The enzyme catalyses [glutamine synthetase]-O(4)-(5'-adenylyl)-L-tyrosine + phosphate = [glutamine synthetase]-L-tyrosine + ADP. It carries out the reaction [glutamine synthetase]-L-tyrosine + ATP = [glutamine synthetase]-O(4)-(5'-adenylyl)-L-tyrosine + diphosphate. Functionally, involved in the regulation of glutamine synthetase GlnA, a key enzyme in the process to assimilate ammonia. When cellular nitrogen levels are high, the C-terminal adenylyl transferase (AT) inactivates GlnA by covalent transfer of an adenylyl group from ATP to specific tyrosine residue of GlnA, thus reducing its activity. Conversely, when nitrogen levels are low, the N-terminal adenylyl removase (AR) activates GlnA by removing the adenylyl group by phosphorolysis, increasing its activity. The regulatory region of GlnE binds the signal transduction protein PII (GlnB) which indicates the nitrogen status of the cell. This is Bifunctional glutamine synthetase adenylyltransferase/adenylyl-removing enzyme from Pectobacterium atrosepticum (strain SCRI 1043 / ATCC BAA-672) (Erwinia carotovora subsp. atroseptica).